The chain runs to 368 residues: RAB6-interacting golgin (368 aa).

Disordered regions lie at residues 1 to 43 (MAQD…REKA), 55 to 133 (DGSA…DCKV), and 302 to 368 (KQMA…AVAT). Residues 11–27 (EELRRLKQNKDPFEPQR) are compositionally biased toward basic and acidic residues. Over residues 80 to 89 (SPSPVAPSPL) the composition is skewed to pro residues. Residues 114–133 (NSHHGHKSAEVRAPKPDCKV) show a composition bias toward basic and acidic residues. A coiled-coil region spans residues 145 to 310 (RWEVLQQEQR…AKQMASVERL (166 aa)). A necessary for interaction with RCHY1 region spans residues 188–368 (IQKELQALDD…AKNFSAAVAT (181 aa)).

This sequence belongs to the GORAB family. Interacts with RCHY1. Interacts with SCYL1 and RAB6A/RAB6. In terms of tissue distribution, expressed in small intestine, kidney, skeletal muscle, lung, spleen, brain and heart. High expression is observed in osteoblasts and skin; also expressed in osteoclasts albeit at lower levels.

The protein localises to the cytoplasm. It is found in the golgi apparatus. The protein is RAB6-interacting golgin (Gorab) of Mus musculus (Mouse).